The primary structure comprises 122 residues: MIQTESRLEVADNTGAKSVLCIKVLGGSKRRYASVGDVIKVSIKEAAPRGRVKKGEIYSAVVVRTAKGIRRADGSLVKFDGNAAVLLNAKLEPIGTRIFGPVTRELRTEKFMKIVSLAPEVL.

This sequence belongs to the universal ribosomal protein uL14 family. As to quaternary structure, part of the 50S ribosomal subunit. Forms a cluster with proteins L3 and L19. In the 70S ribosome, L14 and L19 interact and together make contacts with the 16S rRNA in bridges B5 and B8.

Binds to 23S rRNA. Forms part of two intersubunit bridges in the 70S ribosome. In Variovorax paradoxus (strain S110), this protein is Large ribosomal subunit protein uL14.